The following is a 105-amino-acid chain: Large ribosomal subunit protein bL21 (105 aa).

This sequence belongs to the bacterial ribosomal protein bL21 family. Part of the 50S ribosomal subunit. Contacts protein L20.

Its function is as follows. This protein binds to 23S rRNA in the presence of protein L20. The sequence is that of Large ribosomal subunit protein bL21 from Rickettsia typhi (strain ATCC VR-144 / Wilmington).